The primary structure comprises 287 residues: Efem/EfeO family lipoprotein (287 aa).

The first 17 residues, methionine 1–alanine 17, serve as a signal peptide directing secretion. Residue cysteine 18 is the site of N-palmitoyl cysteine attachment. Residue cysteine 18 is the site of S-diacylglycerol cysteine attachment. Positions asparagine 20–lysine 50 are disordered. The segment covering histidine 23–glutamine 33 has biased composition (basic and acidic residues).

Belongs to the EfeM/EfeO family.

The protein resides in the cell membrane. The protein is Efem/EfeO family lipoprotein of Staphylococcus haemolyticus (strain JCSC1435).